We begin with the raw amino-acid sequence, 634 residues long: Probable potassium transport system protein Kup 2 (634 aa).

The next 12 membrane-spanning stretches (helical) occupy residues Leu15–Phe35, Val55–Leu75, Trp101–Ile121, Gly142–Phe162, Leu173–Ile193, Ala208–Leu228, Trp252–Leu272, Leu303–Tyr323, Ile351–Phe371, Tyr381–Trp401, Pro408–Ala428, and Glu435–Leu455.

The protein belongs to the HAK/KUP transporter (TC 2.A.72) family.

The protein resides in the cell inner membrane. It carries out the reaction K(+)(in) + H(+)(in) = K(+)(out) + H(+)(out). Transport of potassium into the cell. Likely operates as a K(+):H(+) symporter. The sequence is that of Probable potassium transport system protein Kup 2 from Novosphingobium aromaticivorans (strain ATCC 700278 / DSM 12444 / CCUG 56034 / CIP 105152 / NBRC 16084 / F199).